A 61-amino-acid chain; its full sequence is Metallothionein-1L (61 aa).

The interval 1 to 29 (MDPNCSCATGGSCSCASSCKCKECKCTSC) is beta. A divalent metal cation-binding residues include Cys-5, Cys-7, Cys-13, Cys-15, Cys-19, Cys-21, Cys-24, Cys-26, Cys-29, Cys-33, Cys-34, Cys-36, Cys-37, Cys-41, Cys-44, Cys-48, Cys-50, Cys-57, Cys-59, and Cys-60. The tract at residues 30–61 (KKSCCSCCPMGCAKCAQGCVCKGASEKCSCCA) is alpha.

It belongs to the metallothionein superfamily. Type 1 family. In terms of assembly, monomer. Expressed in reticulocytes.

Metallothioneins have a high content of cysteine residues that bind various heavy metals; these proteins are transcriptionally regulated by both heavy metals and glucocorticoids. The sequence is that of Metallothionein-1L (MT1L) from Homo sapiens (Human).